The following is a 987-amino-acid chain: VPS35 endosomal protein sorting factor-like (987 aa).

Over residues Met-1–Pro-23 the composition is skewed to low complexity. The interval Met-1–Lys-115 is disordered. The span at Asn-43 to Lys-63 shows a compositional bias: basic and acidic residues. The span at Gln-66–Pro-111 shows a compositional bias: low complexity.

The protein belongs to the VPS35L family. In terms of assembly, component of the heterotrimeric retriever complex.

It is found in the endosome. Its function is as follows. Acts as a component of the retriever complex. The retriever complex is a heterotrimeric complex related to retromer cargo-selective complex (CSC) and essential for retromer-independent retrieval and recycling of numerous cargos. This chain is VPS35 endosomal protein sorting factor-like, found in Dictyostelium discoideum (Social amoeba).